The primary structure comprises 428 residues: Trigger factor (428 aa).

The PPIase FKBP-type domain occupies 163–248 (GDTAVIDFEG…VHEIKEKRLP (86 aa)).

It belongs to the FKBP-type PPIase family. Tig subfamily.

Its subcellular location is the cytoplasm. The enzyme catalyses [protein]-peptidylproline (omega=180) = [protein]-peptidylproline (omega=0). In terms of biological role, involved in protein export. Acts as a chaperone by maintaining the newly synthesized protein in an open conformation. Functions as a peptidyl-prolyl cis-trans isomerase. This chain is Trigger factor, found in Geobacillus sp. (strain WCH70).